We begin with the raw amino-acid sequence, 429 residues long: Transcriptional adapter 3 (429 aa).

Residues 41-70 adopt a coiled-coil conformation; sequence IEELDTLQLELETLLSSASRRLRALEEQRQ. 3 disordered regions span residues 86 to 132, 208 to 257, and 274 to 308; these read KLEK…TKVQ, EERR…PFGP, and PMED…HTRS. Basic and acidic residues-rich tracts occupy residues 208–221 and 230–249; these read EERR…DKKK and LDAK…HEPP. Residues 364-404 adopt a coiled-coil conformation; it reads LLKLAREEMRKQELRQRVRVADNEVMEAFRRIMAARQKKRT.

Belongs to the NGG1 family.

The protein localises to the nucleus. Its function is as follows. Functions as a component of the PCAF complex. The PCAF complex is capable of efficiently acetylating histones in a nucleosomal context. This Danio rerio (Zebrafish) protein is Transcriptional adapter 3 (tada3).